A 314-amino-acid chain; its full sequence is Homoserine kinase (314 aa).

95–105 (PHSRGLGSSAS) serves as a coordination point for ATP.

The protein belongs to the GHMP kinase family. Homoserine kinase subfamily.

It is found in the cytoplasm. It catalyses the reaction L-homoserine + ATP = O-phospho-L-homoserine + ADP + H(+). It participates in amino-acid biosynthesis; L-threonine biosynthesis; L-threonine from L-aspartate: step 4/5. Its function is as follows. Catalyzes the ATP-dependent phosphorylation of L-homoserine to L-homoserine phosphate. The polypeptide is Homoserine kinase (Mycobacterium ulcerans (strain Agy99)).